Here is a 448-residue protein sequence, read N- to C-terminus: Antizyme inhibitor 1 (448 aa).

It belongs to the Orn/Lys/Arg decarboxylase class-II family. ODC antizyme inhibitor subfamily. In terms of assembly, monomer. Interacts with OAZ1 and OAZ3; this interaction disrupts the interaction between the antizyme and ODC1. Ubiquitinated, leading to its proteasomal degradation; a process that is reduced in presence of antizyme OAZ1. As to expression, expressed during testis development.

Its subcellular location is the nucleus. Functionally, antizyme inhibitor (AZI) protein that positively regulates ornithine decarboxylase (ODC) activity and polyamine uptake. AZI is an enzymatically inactive ODC homolog that counteracts the negative effect of ODC antizymes (AZs) OAZ1, OAZ2 and OAZ3 on ODC activity by competing with ODC for antizyme-binding. Inhibits antizyme-dependent ODC degradation and releases ODC monomers from their inactive complex with antizymes, leading to formation of the catalytically active ODC homodimer and restoring polyamine production. The sequence is that of Antizyme inhibitor 1 (Azin1) from Mus musculus (Mouse).